A 553-amino-acid polypeptide reads, in one-letter code: Transmembrane protein DDB_G0292058 (553 aa).

The N-terminal stretch at 1–26 (MIKINKILSLLIILLIINCNYQFVKA) is a signal peptide. The next 2 membrane-spanning stretches (helical) occupy residues 80–100 (ILLS…GIIF) and 137–157 (VFIL…VFIT). Residues asparagine 162, asparagine 171, asparagine 178, and asparagine 195 are each glycosylated (N-linked (GlcNAc...) asparagine). Helical transmembrane passes span 243 to 263 (IIIV…VSAL) and 274 to 294 (SIAL…HYPI). N-linked (GlcNAc...) asparagine glycosylation is found at asparagine 315, asparagine 332, asparagine 351, asparagine 396, asparagine 405, and asparagine 462. The helical transmembrane segment at 515–535 (LLIAPTAVFAILLTGLGITGI) threads the bilayer.

It localises to the membrane. The polypeptide is Transmembrane protein DDB_G0292058 (Dictyostelium discoideum (Social amoeba)).